The chain runs to 414 residues: Serine/threonine transporter SstT (414 aa).

8 helical membrane passes run 22–42, 54–74, 89–109, 148–168, 189–209, 223–243, 305–325, and 337–357; these read GLVL…TIGF, IFVK…VMAA, IIVL…IAGF, AIFK…GLAL, IVHV…AETL, LLAV…PILV, MAGA…TLGL, and IVAA…LLLI.

This sequence belongs to the dicarboxylate/amino acid:cation symporter (DAACS) (TC 2.A.23) family.

It localises to the cell inner membrane. It catalyses the reaction L-serine(in) + Na(+)(in) = L-serine(out) + Na(+)(out). It carries out the reaction L-threonine(in) + Na(+)(in) = L-threonine(out) + Na(+)(out). Its function is as follows. Involved in the import of serine and threonine into the cell, with the concomitant import of sodium (symport system). This is Serine/threonine transporter SstT from Haemophilus influenzae (strain 86-028NP).